Reading from the N-terminus, the 86-residue chain is Cell division topological specificity factor (86 aa).

This sequence belongs to the MinE family.

Its function is as follows. Prevents the cell division inhibition by proteins MinC and MinD at internal division sites while permitting inhibition at polar sites. This ensures cell division at the proper site by restricting the formation of a division septum at the midpoint of the long axis of the cell. In Rhizobium johnstonii (strain DSM 114642 / LMG 32736 / 3841) (Rhizobium leguminosarum bv. viciae), this protein is Cell division topological specificity factor.